A 59-amino-acid polypeptide reads, in one-letter code: Large ribosomal subunit protein uL30 (59 aa).

The protein belongs to the universal ribosomal protein uL30 family. As to quaternary structure, part of the 50S ribosomal subunit.

This Streptococcus agalactiae serotype Ia (strain ATCC 27591 / A909 / CDC SS700) protein is Large ribosomal subunit protein uL30.